Consider the following 190-residue polypeptide: Probable RNA-binding protein 18 (190 aa).

Residues 25–106 (HRLWIGNLDP…KKLVVRWAHA (82 aa)) form the RRM domain. Positions 166 to 190 (VYSYFKPPDKKRTTPYSRTAWKSRR) are disordered.

The chain is Probable RNA-binding protein 18 (Rbm18) from Mus musculus (Mouse).